Consider the following 425-residue polypeptide: Serine--tRNA ligase (425 aa).

Position 231-233 (Thr231–Glu233) interacts with L-serine. Residue Arg262–Glu264 coordinates ATP. Residue Glu285 coordinates L-serine. Glu349–Ser352 contributes to the ATP binding site. Ser385 contacts L-serine.

This sequence belongs to the class-II aminoacyl-tRNA synthetase family. Type-1 seryl-tRNA synthetase subfamily. Homodimer. The tRNA molecule binds across the dimer.

The protein localises to the cytoplasm. The enzyme catalyses tRNA(Ser) + L-serine + ATP = L-seryl-tRNA(Ser) + AMP + diphosphate + H(+). It catalyses the reaction tRNA(Sec) + L-serine + ATP = L-seryl-tRNA(Sec) + AMP + diphosphate + H(+). It functions in the pathway aminoacyl-tRNA biosynthesis; selenocysteinyl-tRNA(Sec) biosynthesis; L-seryl-tRNA(Sec) from L-serine and tRNA(Sec): step 1/1. Catalyzes the attachment of serine to tRNA(Ser). Is also able to aminoacylate tRNA(Sec) with serine, to form the misacylated tRNA L-seryl-tRNA(Sec), which will be further converted into selenocysteinyl-tRNA(Sec). In Bartonella bacilliformis (strain ATCC 35685 / KC583 / Herrer 020/F12,63), this protein is Serine--tRNA ligase.